Reading from the N-terminus, the 287-residue chain is mRNA-capping enzyme regulatory subunit OPG124 (287 aa).

The protein belongs to the orthopoxvirus mRNA-capping enzyme regulatory subunit family. Interacts with the catalytic subunit OPG113.

The protein localises to the virion. Its function is as follows. Regulatory subunit of the mRNA cap enzyme which stabilizes the catalytic subunit and enhances its methyltransferase activity through an allosteric mechanism. Heterodimeric mRNA capping enzyme catalyzes the linkage of a N7-methyl-guanosine moiety to the first transcribed nucleotide (cap 0 structure), whereas the methyltransferase OPG102 is responsible for a second methylation at the 2'-O position of the ribose (cap 1 structure). Also involved in early viral gene transcription termination and intermediate viral gene transcription initiation. Early gene transcription termination requires the termination factor VTF, the DNA-dependent ATPase NPH-I/OPG123 and the RAP94/OPG109 subunit of the viral RNA polymerase, as well as the presence of a specific termination motif. Binds, together with RAP94/OPG109, to the termination motif 5'-UUUUUNU-3' in the nascent early mRNA. The polypeptide is mRNA-capping enzyme regulatory subunit OPG124 (OPG124) (Vaccinia virus (strain Copenhagen) (VACV)).